We begin with the raw amino-acid sequence, 132 residues long: Small ribosomal subunit protein uS8 (132 aa).

It belongs to the universal ribosomal protein uS8 family. In terms of assembly, part of the 30S ribosomal subunit. Contacts proteins S5 and S12.

In terms of biological role, one of the primary rRNA binding proteins, it binds directly to 16S rRNA central domain where it helps coordinate assembly of the platform of the 30S subunit. The sequence is that of Small ribosomal subunit protein uS8 from Rhodococcus erythropolis (strain PR4 / NBRC 100887).